Reading from the N-terminus, the 504-residue chain is 2-isopropylmalate synthase (504 aa).

Residues 6–267 (IIIFDTTLRD…YTGIISKEIY (262 aa)) enclose the Pyruvate carboxyltransferase domain. Mn(2+) contacts are provided by Asp-15, His-201, His-203, and Asn-237. The regulatory domain stretch occupies residues 391–504 (EITDLLQSSG…LNSYLRIHKN (114 aa)).

This sequence belongs to the alpha-IPM synthase/homocitrate synthase family. LeuA type 1 subfamily. In terms of assembly, homodimer. Mn(2+) is required as a cofactor.

The protein localises to the cytoplasm. It catalyses the reaction 3-methyl-2-oxobutanoate + acetyl-CoA + H2O = (2S)-2-isopropylmalate + CoA + H(+). It functions in the pathway amino-acid biosynthesis; L-leucine biosynthesis; L-leucine from 3-methyl-2-oxobutanoate: step 1/4. Catalyzes the condensation of the acetyl group of acetyl-CoA with 3-methyl-2-oxobutanoate (2-ketoisovalerate) to form 3-carboxy-3-hydroxy-4-methylpentanoate (2-isopropylmalate). The chain is 2-isopropylmalate synthase from Campylobacter concisus (strain 13826).